Reading from the N-terminus, the 463-residue chain is Quinolone resistance protein NorB (463 aa).

14 helical membrane-spanning segments follow: residues 17-37 (IGIV…VNVV), 53-73 (IAVS…GGLA), 86-106 (IILN…LLLI), 107-127 (IGRL…LSII), 142-162 (YWSI…GAVA), 165-185 (LGWR…LFLI), 201-221 (FDIK…ILIT), 230-250 (SLLF…FIVL), 273-293 (TASN…NTFV), 299-319 (YSSL…LIMI), 334-354 (PMLI…LTFL), 357-377 (IFYV…LGIY), 403-423 (MASA…YAIV), and 435-455 (IALW…LLLV).

The protein belongs to the major facilitator superfamily. TCR/Tet family.

Its subcellular location is the cell membrane. Functionally, multidrug efflux pump that acts independently of NorA and is one of the factors that confers resistance against diverse quinolones and chemical compounds. The chain is Quinolone resistance protein NorB (norB) from Staphylococcus aureus (strain COL).